A 631-amino-acid polypeptide reads, in one-letter code: Golgin subfamily A member 8R (631 aa).

Residues 1–72 (MAEETQHNKL…REGPTSSATL (72 aa)) are disordered. The span at 38-50 (TNGSIPETATSGG) shows a compositional bias: polar residues. 3 coiled-coil regions span residues 85-149 (VLDS…NTDL), 209-247 (ELEQ…HIEG), and 303-419 (SEVE…LSLM). 3 disordered regions span residues 422–451 (PGEG…DPES), 502–523 (AKDA…DEGE), and 551–610 (NSAD…QEHP). The span at 507-519 (LGGGHHQAGAQGG) shows a compositional bias: gly residues. The segment covering 568 to 577 (AADKHGDLRE) has biased composition (basic and acidic residues).

The protein belongs to the GOLGA8 family.

The sequence is that of Golgin subfamily A member 8R from Homo sapiens (Human).